An 843-amino-acid chain; its full sequence is Structure-specific endonuclease subunit SLX4 (843 aa).

Disordered stretches follow at residues 26–111 (SPPS…KTTT), 281–313 (AIPTPTESSTTEDIQGSSSKQQRVKAKKPQKGK), 339–377 (NVAPKSPGRKNISNRPSGMKHSNSGRGKSSTLKNDNGPP), 603–655 (SKTF…AKAL), and 729–748 (ATPNARHSRQRSSSTSFSIE). Polar residues-rich tracts occupy residues 50–69 (ASFSKTPSRKTTSPDSNGEN) and 285–301 (PTESSTTEDIQGSSSKQ). Residues 302-311 (QRVKAKKPQK) are compositionally biased toward basic residues. Composition is skewed to polar residues over residues 349 to 372 (NISNRPSGMKHSNSGRGKSSTLKN) and 603 to 616 (SKTFMPESKPNQGT). Residues 617 to 636 (DDARKNGFRKENHSDVRVRP) are compositionally biased toward basic and acidic residues. Residues 739–748 (RSSSTSFSIE) show a composition bias toward low complexity.

It belongs to the SLX4 family. As to quaternary structure, forms a heterodimer with SLX1. Phosphorylated in response to DNA damage.

It localises to the nucleus. Functionally, regulatory subunit of the SLX1-SLX4 structure-specific endonuclease that resolves DNA secondary structures generated during DNA repair and recombination. Has endonuclease activity towards branched DNA substrates, introducing single-strand cuts in duplex DNA close to junctions with ss-DNA. The chain is Structure-specific endonuclease subunit SLX4 from Ajellomyces capsulatus (strain G186AR / H82 / ATCC MYA-2454 / RMSCC 2432) (Darling's disease fungus).